The chain runs to 2028 residues: MEALTELCDIIAKNPKQFSEKLAWICGRCPQTEWLLAESPRVSRSHLNAVLAVARIISKNPESIDNRAKSVVNEFLSAIPASFRRSFWPHSFPSQLISSFYCDFLSYLSCAADLSPEFGTEVARFTGEVVIAAIAPSSGDSDGDPAISKAFLVALSQHFPSILQSDGDKLITMLLDQFVLNRAPASPKEQRQQNSANSETDTSSSQGSPISTNRYPSGKTEMASPGDEVASHGSNLSSKSSSSVVMNGGSIVWKSGVDQLSFGFSEGSGGANPVFRQQVASFEDESIESLEKQEIAFRLITHILDKVKIDSKLQDQVRFIAKRQLQSMSAFLKSRKRDWNEQGQVLKTRVNAKLSVYQAAAKMKIKSLVSLETDGKTSKRLVLETLALLLDAADACLTSVWRKMKACEELFDSLLSGIAKIAVARGGQPLRVLLIRLKPLVLAVCALPDQGAMLESIFKTSCVIIESAWAKDRAPVDNFIMGLASSIRERNDYEEQVDREKQVPAVQLNVIRLLADLNVAVKKPEVADMILPLFIESLEEGDASTPSFLRLQLLDAVSRIATLGFDKSYRETVVLMTRSYLSKLSSVGSVESKTSAPEATTERVETLPAGFLTIASGLMDTKLRSDYRHRLLSLCSDVGLAAESKSGGSGVDFLGPLLPAVAEICSDFDPTMDVEPSLLKLFRNLWFYIALFGLAPPIVKTPTPPLKSTSNSVNSVGSMSATALQAVGGPYMWDNQWALAVQRIAQGTPPLVVSSVKWLEDELELNALHNPGSRRGNGNEKVASTQRLALSTALGGRVDVAAMNTISGVKATYLLAVAFLEIIRFISNGGILNGESSVSASRSAFSCVFEYLKTPNLTPAVSQCLTAIVHRAFETAVSWLEDRISLTGKDARNRELTTYAHACFLIKSMSQRDEHVRDISVNLLTQLRDKFPQVLWHSSCLDSLLFSVHDNTPSTVVNDPAWTAAVRSLYQKVVREWIIISLSYAPCTSQGLLQDKLCKANTWQRAQTTTDVVSLLSEIKIGTGKNELWSGIRTANIPAVMAAAAAASGANLKVSEAFNLEVLGTGVVSATVKCNHAGEIAGMRRLYNSIGGFQSGSTPSGFGGGLQRLISGAFSQAPQPEDDSFNEMLIARFVRLLQQFVNTAEKGGEVEKSQFRETCSQATALLLSNLGGESKTNVEGFSQLLRLLCWCPAYISTPDAMETGIFIWTWLVSAAPQLVSLVLAELVDAWIWTIDTKRGLFASDVRYSGPAAKLRPHLSPGEPEDPPESDPVDQIVAHRLWLGFLIDRFEVVRHNSAEQLLLLGRMLQRSTDLEWCFTRHPAAAGTFFSLMLLGLKFCSCQTQGNMQKFRSGLQLLEDRIYRTSLGWFAHQPEWYDVNIPNFCHSEALSVSVFVHFLSNELSESSQSDSKGKPRESGNLIDVTDQYHPVWGEMDNYTLGKEKRKQLLLMLCQHEADRLDVWAQPISSKDSPYSRLKISSEKWTEYAKTAFSVDPRIALSVASRFPANASVKSEVTQLVQTNIVDLRTIPEALPYFVTPKNVEENSVLLQQLPHWAACSITQALEFLTPAYKGHPRVMAYVLRVLESYPPERVTFFMPQLVQSLRYDDGRLVEGYLLRATQRSDIFAHILIWHLQGEDVQETPKDGSIDKNAAFQEILPQVRQHIIDGFSPNALDMFTREFDFFDKVTSISGVLFPLPKEERRAGIRRELEKIEMQGDDLYLPTAPNKLVRGIRVDSGIPLQSAAKVPIMITFNVIDRDGDHSDVKPQACIFKVGDDCRQDVLALQVISLLRDIFQAAGLNLYLFPYGVLPTGAERGIIEVVPNTRSRSQMGETTDGGLYEIFQQDYGPVGSTTFETARENFLISSAGYAVASLLLQPKDRHNGNLLFDDVGRLVHIDFGFILETSPGGNMRFESAHFKLSHEMTQLLDPSGVMKSKTWHQFVSLCVKGYLAARRQMDGIISTVQMMLESGLPCFSRGDPIGNLRKRFHPEMSEREAAHFMIHVCTDAYNKWTTAGYDLIQYLQQGIEK.

A disordered region spans residues 184-241; sequence PASPKEQRQQNSANSETDTSSSQGSPISTNRYPSGKTEMASPGDEVASHGSNLSSKSS. Positions 192–215 are enriched in polar residues; it reads QQNSANSETDTSSSQGSPISTNRY. The segment covering 231-241 has biased composition (low complexity); it reads SHGSNLSSKSS. Residues 1483-1659 enclose the PIK helical domain; sequence TEYAKTAFSV…NAAFQEILPQ (177 aa). The interval 1660 to 1773 is pleckstrin homology (PH) domain conferring phosphoinositide binding specificity; it reads VRQHIIDGFS…VKPQACIFKV (114 aa). A PI3K/PI4K catalytic domain is found at 1734-2012; that stretch reads VDSGIPLQSA…VCTDAYNKWT (279 aa). The interval 1740-1746 is G-loop; sequence LQSAAKV. Residues 1876-1884 are catalytic loop; it reads QPKDRHNGN. An activation loop region spans residues 1895-1920; the sequence is HIDFGFILETSPGGNMRFESAHFKLS.

The protein belongs to the PI3/PI4-kinase family. Type III PI4K subfamily. As to quaternary structure, interacts in vitro with actin filaments via its PH domain. In terms of tissue distribution, present in leaves and inflorescences.

The protein resides in the membrane. The protein localises to the cytoplasm. It is found in the perinuclear region. The catalysed reaction is a 1,2-diacyl-sn-glycero-3-phospho-(1D-myo-inositol) + ATP = a 1,2-diacyl-sn-glycero-3-phospho-(1D-myo-inositol 4-phosphate) + ADP + H(+). Repressed by PtdIns4P, adenosine and wortmannin, but stimulated by other negatively charged lipids such as PtdIns3P, PtdOH, and phosphatidyl-serine (PtdSer). Acts on phosphatidylinositol (PtdIns) in the first committed step in the production of the second messenger inositol-1,4,5,-trisphosphate. Can bind to phosphatidylinositol 4-monophosphate (PI-4-P or PtdIns4P), phosphatidylinositol 4,5-bisphosphate (PI-4,5-P2 or PtdIns4,5P2), and phosphatidic acid (PtdOH), but not to 3-phosphoinositides. May function upstream of the cold response phosphoinositide-dependent phospholipase C (PI-PLC) pathway. This Arabidopsis thaliana (Mouse-ear cress) protein is Phosphatidylinositol 4-kinase alpha 1.